The following is a 283-amino-acid chain: 5'-nucleotidase SurE (283 aa).

A divalent metal cation is bound by residues Asp14, Asp15, Ser47, and Asn105.

It belongs to the SurE nucleotidase family. It depends on a divalent metal cation as a cofactor.

It localises to the cytoplasm. The enzyme catalyses a ribonucleoside 5'-phosphate + H2O = a ribonucleoside + phosphate. In terms of biological role, nucleotidase that shows phosphatase activity on nucleoside 5'-monophosphates. This Chlamydia trachomatis serovar L2 (strain ATCC VR-902B / DSM 19102 / 434/Bu) protein is 5'-nucleotidase SurE.